We begin with the raw amino-acid sequence, 636 residues long: Asparagine synthetase domain-containing protein 1 (636 aa).

Catalysis depends on Cys-2, which acts as the Nucleophile. Residues 2–187 (CGICCVVALS…ASGIFKMDLR (186 aa)) enclose the Glutamine amidotransferase type-2 domain. The Asparagine synthetase domain occupies 291 to 607 (QFIDVLDEAV…GLEAASILPK (317 aa)).

In Gallus gallus (Chicken), this protein is Asparagine synthetase domain-containing protein 1 (ASNSD1).